Here is a 212-residue protein sequence, read N- to C-terminus: Entry-fusion complex associated protein OPG083 (212 aa).

At 1-175 the chain is on the virion surface side; that stretch reads MAETKEFKTL…IIENRLPYYD (175 aa). Cystine bridges form between Cys33–Cys55, Cys47–Cys127, and Cys107–Cys149. The helical transmembrane segment at 176–196 threads the bilayer; the sequence is PWFLVGVAIILVIFTVAICSI. Topologically, residues 197 to 212 are intravirion; it reads RRNLALKYRYGTFLYV.

Belongs to the orthopoxvirus OPG053 family. In terms of assembly, component of the entry fusion complex (EFC) composed of OPG053/F9, OPG076/O3, OPG086/G3, OPG094/G9, OPG095/L1, OPG099/L5, OPG107/H2, OPG143/A16, OPG104/J5, OPG147/A21 and OPG155/A28. Except for OPG095/L1 and OPG052/F9, each of the EFC proteins is required for assembly or stability of the complex. In terms of processing, disulfid bonds are oxidized in the cytoplasm by OPG088 protein. Unglycosylated because produced in viral factories instead of the classic ER -Golgi route.

The protein localises to the virion membrane. Functionally, component of the entry fusion complex (EFC), which consists of 11 proteins. During cell infection, this complex mediates entry of the virion core into the host cytoplasm by a two-step mechanism consisting of lipid mixing of the viral and cellular membranes and subsequent pore formation. This chain is Entry-fusion complex associated protein OPG083 (OPG053), found in Vaccinia virus (strain Western Reserve) (VACV).